Reading from the N-terminus, the 378-residue chain is MLPLSIKDDEYKPPKFNLFGKISGWFRSILSDKTSRNLFFFLCLNLSFAFVELLYGIWSNCLGLISDSFHMFFDSTAILAGLAASVISKWRDNDAFSYGYVRAEVLAGFVNGLFLIFTAFFIFSEGVERALAPPDVHHERLLLVSILGFVVNLVGIFVFNHGGHGHSHGSGHGHSHSLFNGALDHSHGHEDHCHSHGAKHGGAHSHDHDHAHGHGHLHSHDGPSFKETAGPSRQILQGVFLHILADTLGSIGVIASAIMMQNFGLMIADPICSILIAILIVVSVIPLLRESIGILMQRTPPSLENVLPQCYQRVQQLQGVYNLQEQHFWTLCSDVYVGTLKLVVAPDADARWILSQTHNIFTQAGVRQLYVQIDFAAM.

Over 1 to 37 (MLPLSIKDDEYKPPKFNLFGKISGWFRSILSDKTSRN) the chain is Cytoplasmic. Residues 38–58 (LFFFLCLNLSFAFVELLYGIW) form a helical membrane-spanning segment. The Lumenal segment spans residues 59–67 (SNCLGLISD). The helical transmembrane segment at 68-88 (SFHMFFDSTAILAGLAASVIS) threads the bilayer. Residues 89–102 (KWRDNDAFSYGYVR) lie on the Cytoplasmic side of the membrane. Residues 103–123 (AEVLAGFVNGLFLIFTAFFIF) traverse the membrane as a helical segment. Residues 124–140 (SEGVERALAPPDVHHER) lie on the Lumenal side of the membrane. A helical transmembrane segment spans residues 141-161 (LLLVSILGFVVNLVGIFVFNH). Positions 161-220 (HGGHGHSHGSGHGHSHSLFNGALDHSHGHEDHCHSHGAKHGGAHSHDHDHAHGHGHLHSH) are his-rich loop. Residues 162–238 (GGHGHSHGSG…AGPSRQILQG (77 aa)) are Cytoplasmic-facing. Residues 186-228 (SHGHEDHCHSHGAKHGGAHSHDHDHAHGHGHLHSHDGPSFKET) are disordered. Residues 204-224 (HSHDHDHAHGHGHLHSHDGPS) are compositionally biased toward basic and acidic residues. A helical transmembrane segment spans residues 239–259 (VFLHILADTLGSIGVIASAIM). At 260–264 (MQNFG) the chain is on the lumenal side. Residues 265-285 (LMIADPICSILIAILIVVSVI) traverse the membrane as a helical segment. At 286–378 (PLLRESIGIL…LYVQIDFAAM (93 aa)) the chain is on the cytoplasmic side.

It belongs to the cation diffusion facilitator (CDF) transporter (TC 2.A.4) family. SLC30A subfamily. As to quaternary structure, homooligomer.

Its subcellular location is the golgi apparatus membrane. It localises to the cytoplasmic vesicle. The protein resides in the golgi apparatus. It is found in the trans-Golgi network. The protein localises to the sarcoplasmic reticulum. Its subcellular location is the mitochondrion. It carries out the reaction Zn(2+)(in) = Zn(2+)(out). Its function is as follows. Zinc ion transporter mediating zinc entry from the cytosol into the lumen of organelles along the secretory pathway. By contributing to zinc ion homeostasis within the early secretory pathway, regulates the activation and folding of enzymes like alkaline phosphatases. The chain is Zinc transporter 7 from Rattus norvegicus (Rat).